Here is a 179-residue protein sequence, read N- to C-terminus: Protein P20B (179 aa).

The protein is Protein P20B of Vitis vinifera (Grape).